A 116-amino-acid polypeptide reads, in one-letter code: Protein TCL1B1 (116 aa).

It belongs to the TCL1 family.

This chain is Protein TCL1B1 (Tcl1b1), found in Mus musculus (Mouse).